Consider the following 305-residue polypeptide: tRNA pseudouridine synthase B (305 aa).

Asp39 (nucleophile) is an active-site residue.

It belongs to the pseudouridine synthase TruB family. Type 1 subfamily.

The catalysed reaction is uridine(55) in tRNA = pseudouridine(55) in tRNA. Functionally, responsible for synthesis of pseudouridine from uracil-55 in the psi GC loop of transfer RNAs. This Staphylococcus aureus (strain bovine RF122 / ET3-1) protein is tRNA pseudouridine synthase B.